We begin with the raw amino-acid sequence, 429 residues long: MNHSRSHALFAQAQTVLPGGVNSPVRAFKSVGGEPFFVARADGSYLFDVDGNRYIDYVGSWGPMIAGHNHPAVREAVERAIRDGLSFGAPCAAEVTMAETITGLVPSCEMVRMVNSGTEATLSAVRLARGATGRNRIIKFEGCYHGHGDSFLVKAGSGMLTLGVPTSPGVPAGLSELTATLSFNDFEGATALFDEIGPEVAAVIIEPVVGNANCIPPQAGYLQHLRTLCTRHGALLIFDEVMTGFRVALGGAQAHYGVTPDLSTFGKIIGGGMPVGAYGGRRDLMEQIAPAGPIYQAGTLSGNPVAMAAGLAMLELVQEPGFHMRLSEATSTLCEGLKDAARAAGIAVTTNQVGGMFGLFFTDDIVESYAQATACDITSFNRFFHAMLQRGVYLAPSAYEAGFMSSAHDATVIEATLAAARDAFADVAR.

Lys-267 carries the post-translational modification N6-(pyridoxal phosphate)lysine.

This sequence belongs to the class-III pyridoxal-phosphate-dependent aminotransferase family. HemL subfamily. Homodimer. Pyridoxal 5'-phosphate serves as cofactor.

It localises to the cytoplasm. It carries out the reaction (S)-4-amino-5-oxopentanoate = 5-aminolevulinate. Its pathway is porphyrin-containing compound metabolism; protoporphyrin-IX biosynthesis; 5-aminolevulinate from L-glutamyl-tRNA(Glu): step 2/2. This is Glutamate-1-semialdehyde 2,1-aminomutase from Xanthomonas oryzae pv. oryzae (strain PXO99A).